The sequence spans 615 residues: MPSPASNTWINTTLPSSCSSPFKDLASTSSSPTTLLPFKKRSSSNTNTITCSLQTLHYPKQYQPTSTSTTTTPTPIKPTTTTTTTTPHRETKPLSDTKQPFPQKWNFLQKAAATGLDMVETALVSHESKHPLPKTADPKVQIAGNFAPVPEHAADQALPVVGKIPKCIDGVYVRNGANPLYEPVAGHHFFDGDGMVHAVKFTNGAASYACRFTETQRLAQEKSLGRPVFPKAIGELHGHSGIARLLLFYARSLFQLVDGSHGMGVANAGLVYFNNHLLAMSEDDLPYHVRITSNGDLTTVGRYDFNGQLNSTMIAHPKLDPVNGDLHALSYDVVQKPYLKYFRFSADGVKSPDVEIPLKEPTMMHDFAITENFVVVPDQQVVFKLTEMITGGSPVVYDKNKTSRFGILDKNAKDANAMRWIDAPECFCFHLWNAWEEPETDEIVVIGSCMTPADSIFNECDESLKSVLSEIRLNLRTGKSTRRPIISDAEQVNLEAGMVNRNKLGRKTQFAYLALAEPWPKVSGFAKVDLFSGEVQKYMYGEEKFGGEPLFLPNGEEEGDGYILAFVHDEKEWKSELQIVNAQNLKLEASIKLPSRVPYGFHGTFIHSKDLRKQA.

The transit peptide at 1 to 41 (MPSPASNTWINTTLPSSCSSPFKDLASTSSSPTTLLPFKKR) directs the protein to the chloroplast. Disordered regions lie at residues 20–45 (SPFK…SSSN) and 62–101 (YQPT…KQPF). 2 stretches are compositionally biased toward low complexity: residues 27–37 (STSSSPTTLLP) and 64–86 (PTST…TTTT). His316, His365, and His430 together coordinate Fe cation. Residues 571-592 (KEWKSELQIVNAQNLKLEASIK) are a coiled coil. His602 is a Fe cation binding site.

Belongs to the carotenoid oxygenase family. Fe(2+) is required as a cofactor.

The protein localises to the plastid. It is found in the chloroplast thylakoid membrane. It carries out the reaction a 9-cis-epoxycarotenoid + O2 = a 12'-apo-carotenal + 2-cis,4-trans-xanthoxin. The catalysed reaction is 9-cis-violaxanthin + O2 = (3S,5R,6S)-5,6-epoxy-3-hydroxy-5,6-dihydro-12'-apo-beta-caroten-12'-al + 2-cis,4-trans-xanthoxin. The enzyme catalyses 9'-cis-neoxanthin + O2 = (3S,5R,6R)-3,5-dihydroxy-6,7-didehydro-5,6-dihydro-12'-apo-beta-caroten-12'-al + 2-cis,4-trans-xanthoxin. Functionally, has a 11,12(11',12') 9-cis epoxycarotenoid cleavage activity. Catalyzes the first step of abscisic-acid biosynthesis from carotenoids, in response to water stress. Active on 9-cis-violaxanthin and 9'-cis-neoxanthin, but not on the all-trans isomers of violaxanthin and neoxanthin. This Phaseolus vulgaris (Kidney bean) protein is 9-cis-epoxycarotenoid dioxygenase NCED1, chloroplastic (NCED1).